Reading from the N-terminus, the 533-residue chain is Protein mono-ADP-ribosyltransferase PARP3 (533 aa).

The interval 1–30 is disordered; it reads MAPKRKASVQTEGSKKRRQGTEEEDSFRST. Lysine 6 is subject to N6-(ADP-ribosyl)lysine. Glutamate 12 bears the ADP-ribosyl glutamic acid mark. Residues 14–18 carry the Nuclear localization signal motif; it reads SKKRR. ADP-ribosyl glutamic acid occurs at positions 24 and 32. Positions 57-147 constitute a WGR domain; sequence GIQVHEDYDC…DRFVAQPNKY (91 aa). The residue at position 138 (aspartate 138) is an ADP-ribosyl aspartic acid. 4 positions are modified to ADP-ribosyl glutamic acid: glutamate 160, glutamate 230, glutamate 309, and glutamate 310. In terms of domain architecture, PARP alpha-helical spans 181–299; the sequence is PCSLDPATQN…DIELAQTLQA (119 aa). The 221-residue stretch at 313 to 533 folds into the PARP catalytic domain; that stretch reads HPLDRDYQLL…RLRYLLEIHL (221 aa).

The protein belongs to the ARTD/PARP family. In terms of assembly, interacts with PARP1; leading to activate PARP1 in absence of DNA. Interacts with PRKDC. Interacts with XRCC5/Ku80; the interaction is dependent on nucleic acids. Interacts with XRCC6/Ku70; the interaction is dependent on nucleic acids. Interacts with EZH2, HDAC1, HDAC2, SUZ12, YY1, LRIG3 and LIG4. Auto-ADP-ribosylated.

It is found in the nucleus. It localises to the chromosome. The protein localises to the cytoplasm. The protein resides in the cytoskeleton. Its subcellular location is the microtubule organizing center. It is found in the centrosome. It localises to the centriole. The enzyme catalyses L-aspartyl-[protein] + NAD(+) = 4-O-(ADP-D-ribosyl)-L-aspartyl-[protein] + nicotinamide. It carries out the reaction L-glutamyl-[protein] + NAD(+) = 5-O-(ADP-D-ribosyl)-L-glutamyl-[protein] + nicotinamide. The catalysed reaction is L-lysyl-[protein] + NAD(+) = N(6)-(ADP-D-ribosyl)-L-lysyl-[protein] + nicotinamide + H(+). Mono-ADP-ribosyltransferase that mediates mono-ADP-ribosylation of target proteins and plays a key role in the response to DNA damage. Mediates mono-ADP-ribosylation of glutamate, aspartate or lysine residues on target proteins. In contrast to PARP1 and PARP2, it is not able to mediate poly-ADP-ribosylation. Involved in DNA repair by mediating mono-ADP-ribosylation of a limited number of acceptor proteins involved in chromatin architecture and in DNA metabolism, such as histone H2B, XRCC5 and XRCC6. ADP-ribosylation follows DNA damage and appears as an obligatory step in a detection/signaling pathway leading to the reparation of DNA strand breaks. Involved in single-strand break repair by catalyzing mono-ADP-ribosylation of histone H2B on 'Glu-2' (H2BE2ADPr) of nucleosomes containing nicked DNA. Cooperates with the XRCC5-XRCC6 (Ku80-Ku70) heterodimer to limit end-resection thereby promoting accurate NHEJ. Suppresses G-quadruplex (G4) structures in response to DNA damage. Associates with a number of DNA repair factors and is involved in the response to exogenous and endogenous DNA strand breaks. Together with APLF, promotes the retention of the LIG4-XRCC4 complex on chromatin and accelerate DNA ligation during non-homologous end-joining (NHEJ). May link the DNA damage surveillance network to the mitotic fidelity checkpoint. Acts as a negative regulator of immunoglobulin class switch recombination, probably by controlling the level of AICDA /AID on the chromatin. In addition to proteins, also able to ADP-ribosylate DNA: mediates DNA mono-ADP-ribosylation of DNA strand break termini via covalent addition of a single ADP-ribose moiety to a 5'- or 3'-terminal phosphate residues in DNA containing multiple strand breaks. In Mus musculus (Mouse), this protein is Protein mono-ADP-ribosyltransferase PARP3.